A 309-amino-acid polypeptide reads, in one-letter code: MEDQMNYYRFSREQWKQFYRNNQHQVPLTAANLHEIEAFNDRISLDDVRDIYMPFAHLLQAKYEHYLSWRETESVFLHRQNRQSPFIIGVSGSVAVGKTTTARLLEILFKYLYPDRRTQLITTDGFLYPNAELKKMQLMERKGFPESYDMTRLIQFLNDVKSGKPLAKAPVYSHQTYDIVPNRFDVITHPDILIIEGINVLQLPSNQAIYISDFTDFSVYVDADADLIEDWYLERFKALMKTAFQDPTNYFYPWAIGDPKDAMAMAERVWEEVNLKNLNDYILPTRNRADLILHKVAHHVIDAVYFRKY.

ATP is bound at residue 92–99 (GSVAVGKT).

This sequence belongs to the prokaryotic pantothenate kinase family.

It localises to the cytoplasm. The catalysed reaction is (R)-pantothenate + ATP = (R)-4'-phosphopantothenate + ADP + H(+). It functions in the pathway cofactor biosynthesis; coenzyme A biosynthesis; CoA from (R)-pantothenate: step 1/5. The protein is Pantothenate kinase (coaA) of Lactiplantibacillus plantarum (strain ATCC BAA-793 / NCIMB 8826 / WCFS1) (Lactobacillus plantarum).